We begin with the raw amino-acid sequence, 471 residues long: Glutamate--tRNA ligase (471 aa).

The short motif at 9-19 (PSPTGYLHVGG) is the 'HIGH' region element. Zn(2+)-binding residues include Cys-98, Cys-100, Cys-125, and His-127. The 'KMSKS' region motif lies at 237 to 241 (KLSKR). Lys-240 contributes to the ATP binding site.

It belongs to the class-I aminoacyl-tRNA synthetase family. Glutamate--tRNA ligase type 1 subfamily. As to quaternary structure, monomer. It depends on Zn(2+) as a cofactor.

The protein localises to the cytoplasm. The enzyme catalyses tRNA(Glu) + L-glutamate + ATP = L-glutamyl-tRNA(Glu) + AMP + diphosphate. Catalyzes the attachment of glutamate to tRNA(Glu) in a two-step reaction: glutamate is first activated by ATP to form Glu-AMP and then transferred to the acceptor end of tRNA(Glu). This Enterobacter sp. (strain 638) protein is Glutamate--tRNA ligase.